We begin with the raw amino-acid sequence, 147 residues long: MIYWIFLGLAIIAEIIGTLSMKYASVSGEMTGHIVMYFMITGSYVMLSLAVKKVALGVAYALWEGIGILIITIFSVMWFGETLSPLKIAGLVTLIGGILLVKSGTRKPKQPNCHRGNRPPSVQELKTQTTGHHKGVAVESGEHHAAA.

4 helical membrane-spanning segments follow: residues 1–21, 31–51, 54–74, and 81–101; these read MIYW…TLSM, TGHI…SLAV, VALG…ITIF, and ETLS…ILLV. The interval 105-147 is disordered; the sequence is TRKPKQPNCHRGNRPPSVQELKTQTTGHHKGVAVESGEHHAAA.

This sequence belongs to the drug/metabolite transporter (DMT) superfamily. Small multidrug resistance (SMR) (TC 2.A.7.1) family. MdtJ subfamily. Forms a complex with MdtI.

The protein resides in the cell inner membrane. In terms of biological role, catalyzes the excretion of spermidine. This is Spermidine export protein MdtJ from Yersinia pestis bv. Antiqua (strain Antiqua).